We begin with the raw amino-acid sequence, 310 residues long: Tyrosine recombinase XerC (310 aa).

Residues 11–97 enclose the Core-binding (CB) domain; sequence NSLQKPLSRF…SLRSFFDFLV (87 aa). The 181-residue stretch at 118-298 folds into the Tyr recombinase domain; sequence PLPKNLDVDE…DFQHLAQAYD (181 aa). Active-site residues include Arg157, Lys181, His250, Arg253, and His276. Tyr285 serves as the catalytic O-(3'-phospho-DNA)-tyrosine intermediate.

The protein belongs to the 'phage' integrase family. XerC subfamily. Forms a cyclic heterotetrameric complex composed of two molecules of XerC and two molecules of XerD.

It is found in the cytoplasm. Its function is as follows. Site-specific tyrosine recombinase, which acts by catalyzing the cutting and rejoining of the recombining DNA molecules. The XerC-XerD complex is essential to convert dimers of the bacterial chromosome into monomers to permit their segregation at cell division. It also contributes to the segregational stability of plasmids. The chain is Tyrosine recombinase XerC from Vibrio atlanticus (strain LGP32) (Vibrio splendidus (strain Mel32)).